A 214-amino-acid polypeptide reads, in one-letter code: Ras-related protein Rab-11A (214 aa).

GTP-binding positions include 20-28 (GDSGVGKSN), 39-45 (SLETKST), 68-72 (DTAGQ), 126-129 (NKSD), and 156-158 (SAL). The Effector region signature appears at 42–50 (TKSTIGVEF). S-geranylgeranyl cysteine attachment occurs at residues C213 and C214.

The protein belongs to the small GTPase superfamily. Rab family.

It localises to the contractile vacuole membrane. Functionally, required for normal contractile vacuole structure and function. Cells expressing a dominant negative rab11A exhibit a more extensive contractile vacuole network and enlarged contractile vacuole bladders. These cells exhibit a functional defect in osmotic regulation where cells immersed in water become rounded and detach from the surface, and contain swollen contractile vacuoles. The sequence is that of Ras-related protein Rab-11A (rab11A) from Dictyostelium discoideum (Social amoeba).